Consider the following 187-residue polypeptide: Protein ECM23 (187 aa).

Disordered regions lie at residues 106 to 127 and 167 to 187; these read GKKSLAGYRPKSRKKQTILPNG and KKIRSQQSSDDGTKNFIFKNK. The segment at 126 to 180 adopts a GATA-type zinc-finger fold; it reads NGQPKECATCGDTWTSQWRSGPNGNVELCSRCGIAYRKKMEKKIRSQQSSDDGTK.

Its function is as follows. Involved in morphogenesis. May be involved in cell wall organization and biogenesis. The sequence is that of Protein ECM23 (ECM23) from Saccharomyces cerevisiae (strain ATCC 204508 / S288c) (Baker's yeast).